A 223-amino-acid chain; its full sequence is MNVYQTIANFGTNILESLGLEAALSPTLSNTYIYGIPVLGAIFSGLITKKLTKSTAKSLIVQALFVILGTLAFLVITLASPAKPETGAFNQATLWIAFVVICFIMFFIGANRSIFWSTITELKVNKEIVGLAVGFISIIGFSKDVWLSPLLTGTTNQFIVKNSQGTSFYSQQALVAWAIFALINACLALLVTYMIVRKVKYGKVWVNPKFKKVFALGEQQYGH.

5 helical membrane-spanning segments follow: residues 28–48 (LSNTYIYGIPVLGAIFSGLIT), 59–79 (LIVQALFVILGTLAFLVITLA), 88–108 (AFNQATLWIAFVVICFIMFFI), 128–148 (IVGLAVGFISIIGFSKDVWLS), and 176–196 (AWAIFALINACLALLVTYMIV).

The protein resides in the cell membrane. This is an uncharacterized protein from Mycoplasma pneumoniae (strain ATCC 29342 / M129 / Subtype 1) (Mycoplasmoides pneumoniae).